The primary structure comprises 207 residues: Ras-related protein Rab-5B (207 aa).

Gly-2 is lipidated: N-myristoyl glycine. Residues Gly-41–Ser-49, Ser-60–Thr-66, Asp-90–Gln-94, Asn-148–Asp-151, and Ser-176–Lys-178 contribute to the GTP site. Residues His-63–Phe-71 carry the Effector region motif.

This sequence belongs to the small GTPase superfamily. Rab family. In terms of assembly, interacts with CK1. May interact with ARF1. Post-translationally, myristoylation is required for cell membrane and food vacuole membrane localization. May be palmitoylated on Cys-3. In terms of processing, lacks the C-terminal cysteine motifs subject to isoprenylation present in mammalian RAB5B homolog.

The protein resides in the cell membrane. It is found in the vacuole membrane. The protein localises to the vesicle. The catalysed reaction is GTP + H2O = GDP + phosphate + H(+). Alternates between an inactive GDP-bound form and an active GTP-bound form. Activated by guanine nucleotide-exchange factors (GEFs) and inactivated by GTPase-activating proteins (GAPs). Functionally, small GTPase which regulates vesicle trafficking between organelles. May be involved in the trafficking of the N-myristoylated AK2 from the endoplasmic reticulum to the parasitophorous vacuole membrane. This is Ras-related protein Rab-5B from Plasmodium falciparum (isolate 3D7).